The sequence spans 153 residues: Arginine repressor (153 aa).

The protein belongs to the ArgR family.

It is found in the cytoplasm. Its pathway is amino-acid biosynthesis; L-arginine biosynthesis [regulation]. Regulates arginine biosynthesis genes. The sequence is that of Arginine repressor from Actinobacillus pleuropneumoniae serotype 7 (strain AP76).